A 306-amino-acid chain; its full sequence is N-acetylmuramic acid 6-phosphate etherase (306 aa).

An SIS domain is found at 55-218 (AAATLLAGGR…STGAMIKIGK (164 aa)). Glu83 serves as the catalytic Proton donor. Glu114 is a catalytic residue.

It belongs to the GCKR-like family. MurNAc-6-P etherase subfamily. In terms of assembly, homodimer.

It carries out the reaction N-acetyl-D-muramate 6-phosphate + H2O = N-acetyl-D-glucosamine 6-phosphate + (R)-lactate. The protein operates within amino-sugar metabolism; 1,6-anhydro-N-acetylmuramate degradation. It participates in amino-sugar metabolism; N-acetylmuramate degradation. Its pathway is cell wall biogenesis; peptidoglycan recycling. Its function is as follows. Specifically catalyzes the cleavage of the D-lactyl ether substituent of MurNAc 6-phosphate, producing GlcNAc 6-phosphate and D-lactate. Together with AnmK, is also required for the utilization of anhydro-N-acetylmuramic acid (anhMurNAc) either imported from the medium or derived from its own cell wall murein, and thus plays a role in cell wall recycling. This is N-acetylmuramic acid 6-phosphate etherase from Erwinia tasmaniensis (strain DSM 17950 / CFBP 7177 / CIP 109463 / NCPPB 4357 / Et1/99).